Reading from the N-terminus, the 348-residue chain is Dihydroorotase (348 aa).

The Zn(2+) site is built by His-14 and His-16. Substrate is bound by residues 16-18 (HLR) and Asn-42. Zn(2+) is bound by residues Lys-100, His-137, and His-175. Residue Lys-100 is modified to N6-carboxylysine. His-137 lines the substrate pocket. Leu-220 contributes to the substrate binding site. Residue Asp-248 coordinates Zn(2+). Asp-248 is an active-site residue. Substrate is bound by residues His-252 and Ala-264.

It belongs to the metallo-dependent hydrolases superfamily. DHOase family. Class II DHOase subfamily. As to quaternary structure, homodimer. Requires Zn(2+) as cofactor.

It carries out the reaction (S)-dihydroorotate + H2O = N-carbamoyl-L-aspartate + H(+). The protein operates within pyrimidine metabolism; UMP biosynthesis via de novo pathway; (S)-dihydroorotate from bicarbonate: step 3/3. In terms of biological role, catalyzes the reversible cyclization of carbamoyl aspartate to dihydroorotate. The polypeptide is Dihydroorotase (Pseudomonas putida (strain GB-1)).